A 787-amino-acid chain; its full sequence is Protein translocase subunit SecA (787 aa).

Residues glutamine 85, 103-107, and aspartate 492 each bind ATP; that span reads GEGKT.

It belongs to the SecA family. As to quaternary structure, monomer and homodimer. Part of the essential Sec protein translocation apparatus which comprises SecA, SecYEG and auxiliary proteins SecDF. Other proteins may also be involved.

It is found in the cell membrane. The protein localises to the cytoplasm. It carries out the reaction ATP + H2O + cellular proteinSide 1 = ADP + phosphate + cellular proteinSide 2.. In terms of biological role, part of the Sec protein translocase complex. Interacts with the SecYEG preprotein conducting channel. Has a central role in coupling the hydrolysis of ATP to the transfer of proteins into and across the cell membrane, serving as an ATP-driven molecular motor driving the stepwise translocation of polypeptide chains across the membrane. This is Protein translocase subunit SecA from Lactiplantibacillus plantarum (strain ATCC BAA-793 / NCIMB 8826 / WCFS1) (Lactobacillus plantarum).